The chain runs to 230 residues: N-(5'-phosphoribosyl)anthranilate isomerase (230 aa).

This sequence belongs to the TrpF family.

It catalyses the reaction N-(5-phospho-beta-D-ribosyl)anthranilate = 1-(2-carboxyphenylamino)-1-deoxy-D-ribulose 5-phosphate. It participates in amino-acid biosynthesis; L-tryptophan biosynthesis; L-tryptophan from chorismate: step 3/5. This chain is N-(5'-phosphoribosyl)anthranilate isomerase, found in Thermosynechococcus vestitus (strain NIES-2133 / IAM M-273 / BP-1).